The sequence spans 474 residues: Pyoverdine export outer membrane protein OpmQ (474 aa).

A signal peptide spans 1 to 17 (MSMKNLSLISACLLLGA). Residue C18 is the site of N-palmitoyl cysteine attachment. C18 carries the S-diacylglycerol cysteine lipid modification.

It belongs to the outer membrane factor (OMF) (TC 1.B.17) family. In terms of assembly, part of the tripartite efflux system PvdRT-OpmQ, which is composed of an inner membrane component with both ATPase and permease domains, PvdT, a periplasmic membrane fusion protein, PvdR, and an outer membrane component, OpmQ.

Its subcellular location is the cell outer membrane. Part of the tripartite efflux system PvdRT-OpmQ required for the secretion into the extracellular milieu of the siderophore pyoverdine (PVD), which is involved in iron acquisition. The system is responsible for export of newly synthesized PVD after the final steps of biosynthesis have taken place in the periplasm. It is also responsible for recycling of PVD after internalization of ferri-PVD into the periplasm by the outer-membrane receptor FpvA and release of iron from PVD, thus making PVD available for new cycles of iron uptake. In addition, can expel unwanted metals complexed with PVD from the periplasm into the extracellular medium. This chain is Pyoverdine export outer membrane protein OpmQ, found in Pseudomonas aeruginosa (strain ATCC 15692 / DSM 22644 / CIP 104116 / JCM 14847 / LMG 12228 / 1C / PRS 101 / PAO1).